The chain runs to 174 residues: UPF0316 protein lmo1776 (174 aa).

3 helical membrane-spanning segments follow: residues G4–V24, L36–L56, and I62–I82.

This sequence belongs to the UPF0316 family.

The protein resides in the cell membrane. In Listeria monocytogenes serovar 1/2a (strain ATCC BAA-679 / EGD-e), this protein is UPF0316 protein lmo1776.